The following is a 470-amino-acid chain: Pyruvate kinase I (470 aa).

Arg32 contacts substrate. Asn34, Ser36, Asp66, and Thr67 together coordinate K(+). 34–37 (NFSH) provides a ligand contact to ATP. ATP-binding residues include Arg73 and Lys156. Residue Lys220 participates in substrate binding. Mg(2+) is bound at residue Glu222. 3 residues coordinate substrate: Gly245, Asp246, and Thr278. Asp246 contacts Mg(2+).

Belongs to the pyruvate kinase family. In terms of assembly, homotetramer. Requires Mg(2+) as cofactor. The cofactor is K(+).

It carries out the reaction pyruvate + ATP = phosphoenolpyruvate + ADP + H(+). It participates in carbohydrate degradation; glycolysis; pyruvate from D-glyceraldehyde 3-phosphate: step 5/5. With respect to regulation, belongs to type I PK; fructose 1,6-bisphosphate-activated. In terms of biological role, catalyzes the formation of pyruvate in the last step of glycolysis, it is irreversible under physiological conditions. The reaction is critical for the control of metabolic flux in the second part of glycolysis. The protein is Pyruvate kinase I (pykF) of Salmonella typhimurium (strain LT2 / SGSC1412 / ATCC 700720).